The primary structure comprises 307 residues: Small ribosomal subunit biogenesis GTPase RsgA (307 aa).

The tract at residues methionine 1 to methionine 20 is disordered. Positions glycine 10–methionine 20 are enriched in polar residues. Residues arginine 85–phenylalanine 242 enclose the CP-type G domain. GTP-binding positions include asparagine 135–aspartate 138 and glycine 184–threonine 192. Zn(2+)-binding residues include cysteine 266, cysteine 271, histidine 273, and cysteine 279.

It belongs to the TRAFAC class YlqF/YawG GTPase family. RsgA subfamily. Monomer. Associates with 30S ribosomal subunit, binds 16S rRNA. It depends on Zn(2+) as a cofactor.

The protein resides in the cytoplasm. One of several proteins that assist in the late maturation steps of the functional core of the 30S ribosomal subunit. Helps release RbfA from mature subunits. May play a role in the assembly of ribosomal proteins into the subunit. Circularly permuted GTPase that catalyzes slow GTP hydrolysis, GTPase activity is stimulated by the 30S ribosomal subunit. The sequence is that of Small ribosomal subunit biogenesis GTPase RsgA from Neisseria meningitidis serogroup C / serotype 2a (strain ATCC 700532 / DSM 15464 / FAM18).